Reading from the N-terminus, the 415-residue chain is Tyrosine-protein phosphatase non-receptor type 2 (415 aa).

Positions 5 to 275 constitute a Tyrosine-protein phosphatase domain; it reads IEREFEELDT…RFSYMAIIEG (271 aa). At Tyr22 the chain carries Phosphotyrosine. The residue at position 52 (Ser52) is a Phosphoserine. The residue at position 68 (Tyr68) is a Phosphotyrosine. Substrate-binding positions include Asp182, 216 to 222, and Gln260; that span reads CSAGIGR. Cys216 acts as the Phosphocysteine intermediate in catalysis. Cys216 carries the S-nitrosocysteine modification. Phosphoserine occurs at positions 293, 298, and 304. Positions 346–415 are endoplasmic reticulum location; the sequence is ESALRKRIRE…WTLFFQQNAL (70 aa). The tract at residues 376 to 415 is mediates interaction with STX17; the sequence is ERKRKRWLYWQPILTKMGFMSVILVGAFVGWTLFFQQNAL.

It belongs to the protein-tyrosine phosphatase family. Non-receptor class 1 subfamily. Interacts with RMDN3. Isoform 1 interacts with TMED9. Isoform 1 interacts with STX17; dephosphorylates STX17. Interacts with ITGA1 (via cytoplasmic domain); activates the phosphatase activity towards EGFR. Interacts with TRAF2; probably involved in tumor necrosis factor-mediated signaling. Interacts with MET. Interacts with FAM220A and STAT3; interaction with FAM220A promotes interaction of PTPN2 with transcriptional activator STAT3, leading to dephosphorylation of STAT3 by PTPN2 and negative regulation of STAT3 transcriptional activator activity. In terms of processing, specifically phosphorylated in a cell cycle-dependent manner by cyclin-dependent kinases CDK1 and CDK2. Probably activated through phosphorylation by PKR. Ubiquitously expressed. Isoform 2 is probably the major isoform. Isoform 1 is expressed in T-cells and in placenta.

The protein resides in the endoplasmic reticulum. The protein localises to the endoplasmic reticulum-Golgi intermediate compartment. Its subcellular location is the nucleus. It localises to the cytoplasm. It is found in the cell membrane. The catalysed reaction is O-phospho-L-tyrosyl-[protein] + H2O = L-tyrosyl-[protein] + phosphate. Functionally, non-receptor type tyrosine-specific phosphatase that dephosphorylates receptor protein tyrosine kinases including INSR, EGFR, CSF1R, PDGFR. Also dephosphorylates non-receptor protein tyrosine kinases like JAK1, JAK2, JAK3, Src family kinases, STAT1, STAT3 and STAT6 either in the nucleus or the cytoplasm. Negatively regulates numerous signaling pathways and biological processes like hematopoiesis, inflammatory response, cell proliferation and differentiation, and glucose homeostasis. Plays a multifaceted and important role in the development of the immune system. Functions in T-cell receptor signaling through dephosphorylation of FYN and LCK to control T-cells differentiation and activation. Dephosphorylates CSF1R, negatively regulating its downstream signaling and macrophage differentiation. Negatively regulates cytokine (IL2/interleukin-2 and interferon)-mediated signaling through dephosphorylation of the cytoplasmic kinases JAK1, JAK3 and their substrate STAT1, that propagate signaling downstream of the cytokine receptors. Also regulates the IL6/interleukin-6 and IL4/interleukin-4 cytokine signaling through dephosphorylation of STAT3 and STAT6 respectively. In addition to the immune system, it is involved in anchorage-dependent, negative regulation of EGF-stimulated cell growth. Activated by the integrin ITGA1/ITGB1, it dephosphorylates EGFR and negatively regulates EGF signaling. Dephosphorylates PDGFRB and negatively regulates platelet-derived growth factor receptor-beta signaling pathway and therefore cell proliferation. Negatively regulates tumor necrosis factor-mediated signaling downstream via MAPK through SRC dephosphorylation. May also regulate the hepatocyte growth factor receptor signaling pathway through dephosphorylation of the hepatocyte growth factor receptor MET. Also plays an important role in glucose homeostasis. For instance, negatively regulates the insulin receptor signaling pathway through the dephosphorylation of INSR and control gluconeogenesis and liver glucose production through negative regulation of the IL6 signaling pathways. May also bind DNA. The chain is Tyrosine-protein phosphatase non-receptor type 2 (PTPN2) from Homo sapiens (Human).